A 397-amino-acid chain; its full sequence is 1-deoxy-D-xylulose 5-phosphate reductoisomerase (397 aa).

T10, G11, S12, I13, G36, K37, N38, and N124 together coordinate NADPH. K125 provides a ligand contact to 1-deoxy-D-xylulose 5-phosphate. Residue E126 coordinates NADPH. D150 serves as a coordination point for Mn(2+). Residues S151, E152, S186, and H209 each contribute to the 1-deoxy-D-xylulose 5-phosphate site. E152 is a binding site for Mn(2+). Residue G215 participates in NADPH binding. 1-deoxy-D-xylulose 5-phosphate contacts are provided by S222, N227, K228, and E231. Residue E231 coordinates Mn(2+).

This sequence belongs to the DXR family. As to quaternary structure, homodimer. Mg(2+) is required as a cofactor. The cofactor is Mn(2+).

The catalysed reaction is 2-C-methyl-D-erythritol 4-phosphate + NADP(+) = 1-deoxy-D-xylulose 5-phosphate + NADPH + H(+). It participates in isoprenoid biosynthesis; isopentenyl diphosphate biosynthesis via DXP pathway; isopentenyl diphosphate from 1-deoxy-D-xylulose 5-phosphate: step 1/6. In terms of biological role, catalyzes the NADPH-dependent rearrangement and reduction of 1-deoxy-D-xylulose-5-phosphate (DXP) to 2-C-methyl-D-erythritol 4-phosphate (MEP). In Proteus mirabilis (strain HI4320), this protein is 1-deoxy-D-xylulose 5-phosphate reductoisomerase.